Consider the following 329-residue polypeptide: GTPase Obg (329 aa).

Residues 1 to 159 enclose the Obg domain; sequence MQFIDQACIS…WLLHLELKLL (159 aa). The OBG-type G domain maps to 160–328; sequence AEVGIIGLPN…LLKNVWEKLE (169 aa). ATP is bound by residues 166–173, 191–195, 213–216, 280–283, and 309–311; these read GLPNAGKS, FTTLI, DIPG, NKKE, and SAA. Ser173 and Thr193 together coordinate Mg(2+).

The protein belongs to the TRAFAC class OBG-HflX-like GTPase superfamily. OBG GTPase family. As to quaternary structure, monomer. Mg(2+) serves as cofactor.

It localises to the cytoplasm. Functionally, an essential GTPase which binds GTP, GDP and possibly (p)ppGpp with moderate affinity, with high nucleotide exchange rates and a fairly low GTP hydrolysis rate. Plays a role in control of the cell cycle, stress response, ribosome biogenesis and in those bacteria that undergo differentiation, in morphogenesis control. This Prochlorococcus marinus (strain MIT 9211) protein is GTPase Obg.